The chain runs to 330 residues: Glucosyltransferase 3 (330 aa).

Thr-16 is a UDP binding site. The tract at residues 106 to 111 is substrate protein-binding loop; that stretch reads MFSGNF. UDP-binding positions include Arg-179, 211–214, and 244–249; these read YRPD and SYKLGS.

It belongs to the Gtf3 glucosyltransferase family. Homotetramer; a dimer of dimers. In vitro glycosyltransferase activity is metal-independent. is required as a cofactor.

The protein operates within protein modification; protein glycosylation. Required for polymorphic O-glycosylation of the serine-rich repeat protein Fap1. Catalyzes the second step in glycosylation of the serine-rich repeat protein in this bacteria. Transfers glucose from UDP-glucose to the terminal GlcNAc moiety of 3-O-(N-acetyl-alpha-D-glucosaminyl)-L-seryl-[protein] which results from the first glycosylation step of Fap1; does not use other sugar nucleotides as substrates. In Streptococcus parasanguinis, this protein is Glucosyltransferase 3.